We begin with the raw amino-acid sequence, 266 residues long: UPF0294 protein YafD (266 aa).

It belongs to the UPF0294 family.

The protein localises to the cytoplasm. The polypeptide is UPF0294 protein YafD (Salmonella paratyphi C (strain RKS4594)).